Reading from the N-terminus, the 590-residue chain is Cytidine monophosphate-N-acetylneuraminic acid hydroxylase (590 aa).

Positions 14-112 (LSPVEVANLK…VEMDENNGLL (99 aa)) constitute a Rieske domain. [2Fe-2S] cluster is bound by residues C54, H56, C75, and H78.

This sequence belongs to the CMP-Neu5Ac hydroxylase family. It depends on [2Fe-2S] cluster as a cofactor.

Its subcellular location is the cytoplasm. The enzyme catalyses CMP-N-acetyl-beta-neuraminate + 2 Fe(II)-[cytochrome b5] + O2 + 2 H(+) = CMP-N-glycoloyl-beta-neuraminate + 2 Fe(III)-[cytochrome b5] + H2O. The protein operates within amino-sugar metabolism; N-acetylneuraminate metabolism. Sialic acids are components of carbohydrate chains of glycoconjugates and are involved in cell-cell recognition and cell-pathogen interactions. Catalyzes the conversion of CMP-N-acetylneuraminic acid (CMP-Neu5Ac) into its hydroxylated derivative CMP-N-glycolylneuraminic acid (CMP-Neu5Gc), a sialic acid abundantly expressed at the surface of many cells. This Macaca mulatta (Rhesus macaque) protein is Cytidine monophosphate-N-acetylneuraminic acid hydroxylase (CMAH).